The following is a 302-amino-acid chain: Glycine--tRNA ligase alpha subunit (302 aa).

It belongs to the class-II aminoacyl-tRNA synthetase family. Tetramer of two alpha and two beta subunits.

The protein resides in the cytoplasm. The enzyme catalyses tRNA(Gly) + glycine + ATP = glycyl-tRNA(Gly) + AMP + diphosphate. The protein is Glycine--tRNA ligase alpha subunit of Haemophilus ducreyi (strain 35000HP / ATCC 700724).